The primary structure comprises 2514 residues: Nuclear receptor corepressor 2 (2514 aa).

Residues 1–13 (MSGSTQPVAQTWR) show a composition bias toward polar residues. The segment at 1-24 (MSGSTQPVAQTWRATEPRYPPHSL) is disordered. Arg18 is modified (asymmetric dimethylarginine). Ser54, Ser67, Ser149, and Ser152 each carry phosphoserine. 2 disordered regions span residues 120–162 (PSPL…ELEL) and 190–220 (ISKLKKKQQQLEEEAAKPPEPEKPVSPPPIE). Thr156 carries the post-translational modification Phosphothreonine. Positions 174–215 (QNMDRVDREITMVEQQISKLKKKQQQLEEEAAKPPEPEKPVS) form a coiled coil. A compositionally biased stretch (basic and acidic residues) spans 203–212 (EAAKPPEPEK). At Ser215 the chain carries Phosphoserine. An interaction with SIN3A/B region spans residues 254–312 (LPLYNQPSDTRQYHENIKINQAMRKKLILYFKRRNHARKQWEQKFCQRYDQLMEAWEKK). The segment at 389 to 480 (MRQLAVIPPM…YLTKKNENYK (92 aa)) is deacetylase activation domain (DAD). An SANT 1 domain is found at 427–478 (QVMNMWSEQEKETFREKFMQHPKNFGLIASFLERKTVAECVLYYYLTKKNEN). 3 residues coordinate 1D-myo-inositol 1,4,5,6-tetrakisphosphate: Lys449, Tyr470, and Tyr471. Disordered stretches follow at residues 487–622 (YRRR…EMET), 674–1081 (EKER…APPG), and 1165–1186 (SGVKQEQLSPRGQAGPPESLGV). Ser493 bears the Phosphoserine mark. The span at 494-510 (QQQQQQQQQQQQQQQQQ) shows a compositional bias: low complexity. Positions 516–552 (SQEEKDEKEKEKEAEKEEEKPEVENDKEDLLKEKTDD) are enriched in basic and acidic residues. Residues 522 to 561 (EKEKEKEAEKEEEKPEVENDKEDLLKEKTDDTSGEDNDEK) are a coiled coil. Thr553 carries the phosphothreonine modification. At Ser554 the chain carries Phosphoserine. Composition is skewed to polar residues over residues 597 to 613 (TPQQSAELASMELNESS) and 740 to 753 (ATVNNSSDTESIPS). An SANT 2 domain is found at 610 to 661 (NESSRWTEEEMETAKKGLLEHGRNWSAIARMVGSKTVSQCKNFYFNYKKRQN). Phosphoserine occurs at positions 750 and 753. Composition is skewed to pro residues over residues 777-796 (GPPPGPPTPPPEDIPAPTEP) and 806-822 (PTPPPAPPSPSAPPPVV). The span at 856-866 (GKAEEPVKSEC) shows a compositional bias: basic and acidic residues. N6-acetyllysine is present on Lys878. The span at 902–921 (RATTAKSSGAPQDSDSSATC) shows a compositional bias: polar residues. A compositionally biased stretch (low complexity) spans 937-948 (LLSPRPSLLTPT). Phosphoserine is present on Ser939. Residue Thr946 is modified to Phosphothreonine. At Ser956 the chain carries Phosphoserine. Position 959 is an N6-acetyllysine (Lys959). The span at 980–990 (KVHEPPREDAA) shows a compositional bias: basic and acidic residues. A compositionally biased stretch (pro residues) spans 993 to 1004 (KPAPPAPPPPQN). Over residues 1005–1014 (LQPESDAPQQ) the composition is skewed to polar residues. Residue Lys1168 forms a Glycyl lysine isopeptide (Lys-Gly) (interchain with G-Cter in SUMO2) linkage. Ser1173 is modified (phosphoserine). Residues Lys1210 and Lys1240 each carry the N6-acetyllysine modification. Phosphoserine is present on Ser1251. Residues 1287 to 1307 (TQCSKEDGRSSSGPPHETAAP) form a disordered region. At Ser1323 the chain carries Phosphoserine. Thr1383 bears the Phosphothreonine mark. Disordered regions lie at residues 1440-1482 (PLAP…SPGR) and 1506-1609 (ESLK…HPIS). Ser1479 carries the phosphoserine modification. Over residues 1513–1526 (GTASSSGGSIARGA) the composition is skewed to low complexity. Residues Ser1539, Ser1595, and Ser1619 each carry the phosphoserine modification. An Asymmetric dimethylarginine modification is found at Arg1653. 2 disordered regions span residues 1763–1867 (TAPQ…TQDA) and 1937–2124 (KEAP…PGVK). Low complexity predominate over residues 1766 to 1782 (QPFSSRHSSSPLSPGGP). Ser1775 and Ser1778 each carry phosphoserine. Over residues 1794 to 1813 (SERERDRDRERDRDREREKS) the composition is skewed to basic and acidic residues. Ser1861 carries the phosphoserine modification. The span at 1938–1952 (EAPRVARPERPRADT) shows a compositional bias: basic and acidic residues. Lys1959 carries the N6-acetyllysine modification. Position 2005 is a phosphoserine (Ser2005). Lys2026 is subject to N6-acetyllysine. Low complexity predominate over residues 2043–2060 (SSYSPEGVEPVSPVSSPS). Ser2046, Ser2054, Ser2057, Ser2058, and Ser2060 each carry phosphoserine. Thr2062 is modified (phosphothreonine). Basic and acidic residues predominate over residues 2062–2085 (THDKGLPKHLEELDKSHLEGELRP). Ser2077 carries the phosphoserine modification. The span at 2106–2117 (LPESQPSSSPLL) shows a compositional bias: low complexity. Positions 2128 to 2131 (RVVT) are required for interaction with RARA in the absence of its ligand. The CORNR box of ID1 motif lies at 2136 to 2140 (ISEVI). 2 disordered regions span residues 2174 to 2235 (RRPP…GHSR) and 2248 to 2269 (QTEPSRMGSKSPGNTSQPPAFF). Phosphoserine occurs at positions 2203, 2223, and 2258. A CORNR box of ID2 motif is present at residues 2339–2343 (LEAII). Positions 2384 to 2500 (DGRSDHTLTS…PHHAWDEEPK (117 aa)) are disordered. Residue Ser2413 is modified to Phosphoserine. Positions 2482–2492 (PAGSGPLAGPH) are enriched in low complexity.

Belongs to the N-CoR nuclear receptor corepressors family. In terms of assembly, forms a large corepressor complex that contains SIN3A/B and histone deacetylases HDAC1 and HDAC2. This complex associates with the thyroid (TR) and the retinoid acid receptors (RAR) in the absence of ligand, and may stabilize their interaction with TFIIB. Interacts directly with RARA in the absence of ligand; the interaction represses RARA activity. Interacts (isoform SMRT) with HDAC10. Interacts with MINT. Component of the N-Cor repressor complex, at least composed of NCOR1, NCOR2, HDAC3, TBL1X, TBL1R, CORO2A and GPS2. Interacts with CBFA2T3 and ATXN1L. Interacts with RARB; the interaction is weak and does not repress RARB transactivational activity. Interacts (via 1D-myo-inositol 1,4,5,6-tetrakisphosphate) with HDAC3; promoting the histone deacetylase activity of HDAC3. Interacts with HDAC7 and C1D. Interacts with NR4A2; this interaction increases in the absence of PITX3. Interacts with BCL6 (via the BTB domain), required for BCL6 transcriptional repressor activity on a subset of target genes. Forms ternary complexes with BCOR and BCL6 on target gene promoters but, on enhancer elements, interacts with BCL6 and HDAC3 to repress proximal gene expression. May interact with DEAF1. Interacts with RXRA. Interacts with MECP2. Interacts with ZBTB7A. Interacts with AR. Interacts with TBL1Y. Interacts with SANBR (via the BTB domain). In terms of tissue distribution, ubiquitous. High levels of expression are detected in lung, spleen and brain.

The protein localises to the nucleus. Its function is as follows. Transcriptional corepressor that mediates the transcriptional repression activity of some nuclear receptors by promoting chromatin condensation, thus preventing access of the basal transcription. Acts by recruiting chromatin modifiers, such as histone deacetylases HDAC1, HDAC2 and HDAC3. Required to activate the histone deacetylase activity of HDAC3. Involved in the regulation BCL6-dependent of the germinal center (GC) reactions, mainly through the control of the GC B-cells proliferation and survival. Recruited by ZBTB7A to the androgen response elements/ARE on target genes, negatively regulates androgen receptor signaling and androgen-induced cell proliferation. Isoform 1 and isoform 4 have different affinities for different nuclear receptors. The protein is Nuclear receptor corepressor 2 of Homo sapiens (Human).